Here is a 639-residue protein sequence, read N- to C-terminus: Tetracycline resistance protein TetW (639 aa).

Residues 1 to 243 form the tr-type G domain; sequence MKIINIGILA…VTGLFQPIGE (243 aa). Residues 10 to 17, 74 to 78, and 128 to 131 contribute to the GTP site; these read AHVDAGKT, DTPGH, and NKID.

Belongs to the TRAFAC class translation factor GTPase superfamily. Classic translation factor GTPase family. TetM/TetO subfamily.

Abolishes the inhibitory effect of tetracyclin on protein synthesis by a non-covalent modification of the ribosomes. This Butyrivibrio fibrisolvens protein is Tetracycline resistance protein TetW (tetW).